A 207-amino-acid chain; its full sequence is GTP-binding protein Rheb homolog 1 (207 aa).

GTP is bound by residues G25, K26, S27, Y42, T45, N126, D129, and A157. S27 serves as a coordination point for Mg(2+). The Effector region motif lies at 42–50 (YESTIEDQH). T45 lines the Mg(2+) pocket. Polar residues predominate over residues 180–193 (NLSPTERPNGNSPK). The interval 180 to 207 (NLSPTERPNGNSPKRNPFKDDGKPCSIS) is disordered. Residues 196 to 207 (PFKDDGKPCSIS) show a composition bias toward basic and acidic residues. C204 carries the post-translational modification Cysteine methyl ester. Residue C204 is the site of S-farnesyl cysteine attachment. The propeptide at 205 to 207 (SIS) is removed in mature form.

It belongs to the small GTPase superfamily. Rheb family.

It localises to the cell membrane. It catalyses the reaction GTP + H2O = GDP + phosphate + H(+). Binds GTP and exhibits intrinsic GTPase activity. This is GTP-binding protein Rheb homolog 1 (rheb-1) from Caenorhabditis elegans.